The following is a 721-amino-acid chain: Long-chain-fatty-acid--CoA ligase ACSBG1 (721 aa).

Residues 1 to 64 (MPRGSEAGYC…SHGLELSAPE (64 aa)) form a disordered region. The span at 26-52 (QQGASLGTSQDNSQTSSLIDGQTLSKE) shows a compositional bias: polar residues. Residues Ser34, Ser50, Ser53, and Ser70 each carry the phosphoserine modification. Residues 279-287 (TSGTTGNPK), 469-474 (AGYGLS), Asp547, and Arg562 contribute to the ATP site. The residue at position 655 (Tyr655) is a Phosphotyrosine. Lys698 contacts ATP.

The protein belongs to the ATP-dependent AMP-binding enzyme family. Bubblegum subfamily. Mainly expressed in brain. Also expressed in adrenal gland and testis. In brain, it is present in cerebral cortical and cerebellar neurons and in steroidogenic cells of the adrenal gland, testis and ovary (at protein level).

Its subcellular location is the cytoplasm. It localises to the cytoplasmic vesicle. The protein localises to the microsome. It is found in the endoplasmic reticulum. The protein resides in the cell membrane. The catalysed reaction is a long-chain fatty acid + ATP + CoA = a long-chain fatty acyl-CoA + AMP + diphosphate. It carries out the reaction (E)-hexadec-2-enoate + ATP + CoA = (2E)-hexadecenoyl-CoA + AMP + diphosphate. It catalyses the reaction hexadecanoate + ATP + CoA = hexadecanoyl-CoA + AMP + diphosphate. Catalyzes the conversion of fatty acids such as long-chain and very long-chain fatty acids to their active form acyl-CoAs for both synthesis of cellular lipids, and degradation via beta-oxidation. Can activate diverse saturated, monosaturated and polyunsaturated fatty acids. The polypeptide is Long-chain-fatty-acid--CoA ligase ACSBG1 (Mus musculus (Mouse)).